The following is a 175-amino-acid chain: MAPISVILVTDHKLPEAMSTTREKLLATTSKFVSTFGSFDVDEILAIRTPTCLYHQCCPSFNKNVVTNEETRANFPQFIATFRRFDFSILEPDHTLVDEASRRVMIRAKASAESIVGAYENEYIFILKMTEDCRLVDEIYEFYDTIRLKDLQHRLEAKHISYGDTAPFETRTTQF.

This sequence belongs to the trt14 isomerase family. Homodimer.

It participates in secondary metabolite biosynthesis; terpenoid biosynthesis. Its function is as follows. Part of the gene cluster that mediates the biosynthesis of calidodehydroaustin, a fungal meroterpenoid. The first step of the pathway is the synthesis of 3,5-dimethylorsellinic acid by the polyketide synthase ausA. 3,5-dimethylorsellinic acid is then prenylated by the polyprenyl transferase ausN. Further epoxidation by the FAD-dependent monooxygenase ausM and cyclization by the probable terpene cyclase ausL lead to the formation of protoaustinoid A. Protoaustinoid A is then oxidized to spiro-lactone preaustinoid A3 by the combined action of the FAD-binding monooxygenases ausB and ausC, and the dioxygenase ausE. Acid-catalyzed keto-rearrangement and ring contraction of the tetraketide portion of preaustinoid A3 by ausJ lead to the formation of preaustinoid A4. The aldo-keto reductase ausK, with the help of ausH, is involved in the next step by transforming preaustinoid A4 into isoaustinone which is in turn hydroxylated by the P450 monooxygenase ausI to form austinolide. The cytochrome P450 monooxygenase ausG modifies austinolide to austinol. Austinol is further acetylated to austin by the O-acetyltransferase ausP, which spontaneously changes to dehydroaustin. The cytochrome P450 monooxygenase ausR then converts dehydroaustin is into 7-dehydrodehydroaustin. The hydroxylation catalyzed by ausR permits the O-acetyltransferase ausQ to add an additional acetyl group to the molecule, leading to the formation of acetoxydehydroaustin. The short chain dehydrogenase ausT catalyzes the reduction of the double bond present between carbon atoms 1 and 2 to convert 7-dehydrodehydroaustin into 1,2-dihydro-7-hydroxydehydroaustin. AusQ catalyzes not only an acetylation reaction but also the addition of the PKS ausV diketide product to 1,2-dihydro-7-hydroxydehydroaustin, forming precalidodehydroaustin. Finally, the iron/alpha-ketoglutarate-dependent dioxygenase converts precalidodehydroaustin into calidodehydroaustin. The polypeptide is Austinoid biosynthesis cluster protein F (Aspergillus calidoustus).